Consider the following 188-residue polypeptide: uncharacterized protein (188 aa).

This is an uncharacterized protein from Autographa californica nuclear polyhedrosis virus (AcMNPV).